A 782-amino-acid polypeptide reads, in one-letter code: Phosphoribosylformylglycinamidine synthase subunit PurL (782 aa).

Histidine 48 is an active-site residue. Tyrosine 51 and lysine 90 together coordinate ATP. Mg(2+) is bound at residue glutamate 92. Substrate-binding positions include 93–96 (SHNH) and arginine 115. Catalysis depends on histidine 94, which acts as the Proton acceptor. Residue aspartate 116 coordinates Mg(2+). Glutamine 239 provides a ligand contact to substrate. Aspartate 267 contacts Mg(2+). Substrate is bound at residue 311–313 (ESQ). 2 residues coordinate ATP: aspartate 525 and glycine 562. Asparagine 563 lines the Mg(2+) pocket. Serine 565 serves as a coordination point for substrate.

It belongs to the FGAMS family. In terms of assembly, monomer. Part of the FGAM synthase complex composed of 1 PurL, 1 PurQ and 2 PurS subunits.

Its subcellular location is the cytoplasm. It carries out the reaction N(2)-formyl-N(1)-(5-phospho-beta-D-ribosyl)glycinamide + L-glutamine + ATP + H2O = 2-formamido-N(1)-(5-O-phospho-beta-D-ribosyl)acetamidine + L-glutamate + ADP + phosphate + H(+). Its pathway is purine metabolism; IMP biosynthesis via de novo pathway; 5-amino-1-(5-phospho-D-ribosyl)imidazole from N(2)-formyl-N(1)-(5-phospho-D-ribosyl)glycinamide: step 1/2. Functionally, part of the phosphoribosylformylglycinamidine synthase complex involved in the purines biosynthetic pathway. Catalyzes the ATP-dependent conversion of formylglycinamide ribonucleotide (FGAR) and glutamine to yield formylglycinamidine ribonucleotide (FGAM) and glutamate. The FGAM synthase complex is composed of three subunits. PurQ produces an ammonia molecule by converting glutamine to glutamate. PurL transfers the ammonia molecule to FGAR to form FGAM in an ATP-dependent manner. PurS interacts with PurQ and PurL and is thought to assist in the transfer of the ammonia molecule from PurQ to PurL. In Nostoc sp. (strain PCC 7120 / SAG 25.82 / UTEX 2576), this protein is Phosphoribosylformylglycinamidine synthase subunit PurL.